A 460-amino-acid chain; its full sequence is Carboxypeptidase DacB (460 aa).

A signal peptide spans 1 to 28; that stretch reads MRPTRWRRSTHVAVGVAVLALVVAVVAA. A disordered region spans residues 39 to 64; the sequence is AAEAVPPAPPPATADPGVVPVDLSAP. The active-site Acyl-ester intermediate is the Ser113. The active-site Proton acceptor is the Lys116. The active site involves Ser294.

It belongs to the peptidase S13 family.

In terms of biological role, carboxypeptidase that cleaves terminal D-alanine from peptidoglycan in the mycobacterial cell wall. May cleave L-Lys-D-Ala and/or D-Ala-D-Ala peptide bonds. Exerts important effects on mycobacterial cell morphology and cell division. This is Carboxypeptidase DacB from Mycolicibacterium smegmatis (strain ATCC 700084 / mc(2)155) (Mycobacterium smegmatis).